The primary structure comprises 440 residues: Xylose isomerase (440 aa).

Catalysis depends on residues H100 and D103. Residues E231, E267, H270, D295, D306, D308, and D338 each coordinate Mg(2+).

Belongs to the xylose isomerase family. In terms of assembly, homotetramer. It depends on Mg(2+) as a cofactor.

Its subcellular location is the cytoplasm. It carries out the reaction alpha-D-xylose = alpha-D-xylulofuranose. The polypeptide is Xylose isomerase (Burkholderia orbicola (strain MC0-3)).